The following is a 37-amino-acid chain: Calcitonin gene-related peptide 1 (37 aa).

Cysteines 2 and 7 form a disulfide. A Phenylalanine amide modification is found at Phe37.

Belongs to the calcitonin family.

It is found in the secreted. CGRP1/CALCA is a peptide hormone that induces vasodilation mediated by the CALCRL-RAMP1 receptor complex. Dilates a variety of vessels including the coronary, cerebral and systemic vasculature. Its abundance in the CNS also points toward a neurotransmitter or neuromodulator role. It also elevates platelet cAMP. CGRP1 can also bind and activate CALCR-RAMP1 (AMYR1) receptor complex. In Sus scrofa (Pig), this protein is Calcitonin gene-related peptide 1 (CALCA).